A 159-amino-acid chain; its full sequence is Eukaryotic translation initiation factor 5A-2 (159 aa).

The segment covering 1-10 has biased composition (basic and acidic residues); the sequence is MSDEEHHFEP. The interval 1–21 is disordered; sequence MSDEEHHFEPAADAGASKTYP. K52 is subject to Hypusine.

Belongs to the eIF-5A family. Lys-52 undergoes hypusination, a unique post-translational modification that consists in the addition of a butylamino group from spermidine to lysine side chain, leading to the formation of the unusual amino acid hypusine. eIF-5As are the only known proteins to undergo this modification, which is essential for their function.

Translation factor that promotes translation elongation and termination, particularly upon ribosome stalling at specific amino acid sequence contexts. Binds between the exit (E) and peptidyl (P) site of the ribosome and promotes rescue of stalled ribosome: specifically required for efficient translation of polyproline-containing peptides as well as other motifs that stall the ribosome. Acts as a ribosome quality control (RQC) cofactor by joining the RQC complex to facilitate peptidyl transfer during CAT tailing step. The protein is Eukaryotic translation initiation factor 5A-2 of Medicago sativa (Alfalfa).